The chain runs to 120 residues: Large ribosomal subunit protein uL18 (120 aa).

This sequence belongs to the universal ribosomal protein uL18 family. Part of the 50S ribosomal subunit; part of the 5S rRNA/L5/L18/L25 subcomplex. Contacts the 5S and 23S rRNAs.

Its function is as follows. This is one of the proteins that bind and probably mediate the attachment of the 5S RNA into the large ribosomal subunit, where it forms part of the central protuberance. The chain is Large ribosomal subunit protein uL18 from Exiguobacterium sp. (strain ATCC BAA-1283 / AT1b).